We begin with the raw amino-acid sequence, 545 residues long: Ribulokinase (545 aa).

This sequence belongs to the ribulokinase family.

The catalysed reaction is D-ribulose + ATP = D-ribulose 5-phosphate + ADP + H(+). It catalyses the reaction L-ribulose + ATP = L-ribulose 5-phosphate + ADP + H(+). Its pathway is carbohydrate degradation; L-arabinose degradation via L-ribulose; D-xylulose 5-phosphate from L-arabinose (bacterial route): step 2/3. This chain is Ribulokinase, found in Staphylococcus aureus (strain MRSA252).